Reading from the N-terminus, the 123-residue chain is Large ribosomal subunit protein uL29 (123 aa).

The protein belongs to the universal ribosomal protein uL29 family. Component of the large ribosomal subunit.

It is found in the cytoplasm. In terms of biological role, component of the large ribosomal subunit. The ribosome is a large ribonucleoprotein complex responsible for the synthesis of proteins in the cell. This Ictalurus punctatus (Channel catfish) protein is Large ribosomal subunit protein uL29 (rpl35).